Here is a 428-residue protein sequence, read N- to C-terminus: tRNA modification GTPase MnmE (428 aa).

The (6S)-5-formyl-5,6,7,8-tetrahydrofolate site is built by Arg20, Glu77, and Lys117. The TrmE-type G domain occupies 213–351 (GFEVAIIGPP…LVQRISDVLK (139 aa)). Position 223 (Asn223) interacts with K(+). GTP is bound by residues 223–228 (NAGKST), 242–248 (SEVAGTT), and 267–270 (DTAG). Ser227 serves as a coordination point for Mg(2+). Ser242, Val244, and Thr247 together coordinate K(+). Residue Thr248 coordinates Mg(2+). Position 428 (Lys428) interacts with (6S)-5-formyl-5,6,7,8-tetrahydrofolate.

Belongs to the TRAFAC class TrmE-Era-EngA-EngB-Septin-like GTPase superfamily. TrmE GTPase family. As to quaternary structure, homodimer. Heterotetramer of two MnmE and two MnmG subunits. The cofactor is K(+).

Its subcellular location is the cytoplasm. Its function is as follows. Exhibits a very high intrinsic GTPase hydrolysis rate. Involved in the addition of a carboxymethylaminomethyl (cmnm) group at the wobble position (U34) of certain tRNAs, forming tRNA-cmnm(5)s(2)U34. The protein is tRNA modification GTPase MnmE of Ruegeria pomeroyi (strain ATCC 700808 / DSM 15171 / DSS-3) (Silicibacter pomeroyi).